Consider the following 144-residue polypeptide: Maximins 3/H11 type 2 (144 aa).

Residues 1–18 (MHFKYIVAVSFLIASAYA) form the signal peptide. 2 consecutive propeptides follow at residues 19-43 (RSVQ…REIR) and 73-122 (RTAE…KKEK). Isoleucine 143 carries the post-translational modification Isoleucine amide.

Belongs to the bombinin family. As to expression, expressed by the skin glands.

It is found in the secreted. Functionally, maximin-3 shows antibacterial activity against both Gram-positive and Gram-negative bacteria. It also shows antimicrobial activity against the fungus C.albicans, but not against A.flavus nor P.uticale. It has little hemolytic activity. It possess a significant cytotoxicity against tumor cell lines. It possess a significant anti-HIV activity. It shows high spermicidal activity. Maximin-H11 shows antimicrobial activity against bacteria and against the fungus C.albicans. Shows strong hemolytic activity. The protein is Maximins 3/H11 type 2 of Bombina maxima (Giant fire-bellied toad).